Consider the following 318-residue polypeptide: Pseudouridine-5'-phosphate glycosidase 1 (318 aa).

Glu-29 (proton donor) is an active-site residue. Positions 90 and 110 each coordinate substrate. Position 142 (Asp-142) interacts with Mn(2+). Position 144–146 (144–146) interacts with substrate; it reads SAD. Residue Lys-163 is the Nucleophile of the active site.

This sequence belongs to the pseudouridine-5'-phosphate glycosidase family. Homotrimer. The cofactor is Mn(2+).

It catalyses the reaction D-ribose 5-phosphate + uracil = psi-UMP + H2O. Its function is as follows. Catalyzes the reversible cleavage of pseudouridine 5'-phosphate (PsiMP) to ribose 5-phosphate and uracil. Functions biologically in the cleavage direction, as part of a pseudouridine degradation pathway. The chain is Pseudouridine-5'-phosphate glycosidase 1 from Photorhabdus laumondii subsp. laumondii (strain DSM 15139 / CIP 105565 / TT01) (Photorhabdus luminescens subsp. laumondii).